We begin with the raw amino-acid sequence, 525 residues long: Nuclear pore glycoprotein p62 (525 aa).

S2 carries the post-translational modification N-acetylserine. Repeat copies occupy residues 6–7 (FG), 46–47 (FG), 78–79 (FG), 115–116 (FG), and 143–144 (FG). Residues 6-144 (FGGTGAPAGG…GTAPTGFVFG (139 aa)) form a 5 X 2 AA repeats of F-G region. Residues 260–293 (LKAPGAAPGASTTSTTTTTTTTTTTASTSSSTTT) form a disordered region. Over residues 269 to 293 (ASTTSTTTTTTTTTTTASTSSSTTT) the composition is skewed to low complexity. Residues 331–461 (MTYAQLESLI…QDLKDIIEHL (131 aa)) form a required for centrosome localization region. A coiled-coil region spans residues 331-461 (MTYAQLESLI…QDLKDIIEHL (131 aa)). Phosphoserine occurs at positions 411 and 421. An O-linked (GlcNAc) serine glycan is attached at S471.

This sequence belongs to the nucleoporin NSP1/NUP62 family. Component of the p62 complex, a complex at least composed of NUP62, NUP54, and NUP58. Interacts with NUP88. Interacts with NUTF2. Interacts with HIKESHI. Interacts with OSBPL8. Interacts with CAPG. Interacts with SAS6 and TUBG1 at the centrosome. Interacts with MCM3AP. Post-translationally, the inner channel of the NPC has a different redox environment from the cytoplasm and allows the formation of interchain disulfide bonds between some nucleoporins, the significant increase of these linkages upon oxidative stress reduces the permeability of the NPC.

The protein localises to the nucleus. The protein resides in the nuclear pore complex. It is found in the cytoplasm. It localises to the cytoskeleton. Its subcellular location is the spindle pole. The protein localises to the nucleus envelope. The protein resides in the microtubule organizing center. It is found in the centrosome. Essential component of the nuclear pore complex. The N-terminal is probably involved in nucleocytoplasmic transport. The C-terminal is involved in protein-protein interaction probably via coiled-coil formation, promotes its association with centrosomes and may function in anchorage of p62 to the pore complex. Plays a role in mitotic cell cycle progression by regulating centrosome segregation, centriole maturation and spindle orientation. It might be involved in protein recruitment to the centrosome after nuclear breakdown. This is Nuclear pore glycoprotein p62 (Nup62) from Rattus norvegicus (Rat).